Consider the following 287-residue polypeptide: Protease HtpX (287 aa).

A run of 2 helical transmembrane segments spans residues 4 to 24 (ILLFLATNLAVVLVLSVVLNI) and 36 to 56 (LSGLLVMAAVFGFGGAFISLL). Residue H143 coordinates Zn(2+). Residue E144 is part of the active site. Residue H147 participates in Zn(2+) binding. Helical transmembrane passes span 158–178 (LMQGVVNTFVIFLSRFIANIV) and 192–212 (MVYFGVSMVLELVFGFLASFI). E221 is a Zn(2+) binding site.

Belongs to the peptidase M48B family. Zn(2+) is required as a cofactor.

The protein localises to the cell inner membrane. This chain is Protease HtpX, found in Vibrio cholerae serotype O1 (strain ATCC 39315 / El Tor Inaba N16961).